We begin with the raw amino-acid sequence, 521 residues long: Phomenoic acid biosynthesis cluster-specific transcriptional regulator (521 aa).

A DNA-binding region (zn(2)-C6 fungal-type) is located at residues 46–76; it reads HCWQCRRSCVVCDFTQPGCQRCSAAGVSCPG.

It localises to the nucleus. Its function is as follows. Transcriptional regulator; part of the gene cluster that mediates the biosynthesis of phomenoic acid, a long chain aliphatic carboxylic acid that does not appear to be essential for pathogenicity but may play a role in allowing to outcompete other fungi in the environmental niche via its antifungal properties. Positively regulates the expression of the cluster and subsequent production of phomenoic acid. This chain is Phomenoic acid biosynthesis cluster-specific transcriptional regulator, found in Leptosphaeria maculans (strain JN3 / isolate v23.1.3 / race Av1-4-5-6-7-8) (Blackleg fungus).